The primary structure comprises 442 residues: Serine--tRNA ligase (442 aa).

249 to 251 (TSE) provides a ligand contact to L-serine. 280–282 (RSE) serves as a coordination point for ATP. Glutamate 303 is an L-serine binding site. ATP is bound at residue 367 to 370 (EISS). Serine 402 contributes to the L-serine binding site.

It belongs to the class-II aminoacyl-tRNA synthetase family. Type-1 seryl-tRNA synthetase subfamily. As to quaternary structure, homodimer. The tRNA molecule binds across the dimer.

It is found in the cytoplasm. It carries out the reaction tRNA(Ser) + L-serine + ATP = L-seryl-tRNA(Ser) + AMP + diphosphate + H(+). The enzyme catalyses tRNA(Sec) + L-serine + ATP = L-seryl-tRNA(Sec) + AMP + diphosphate + H(+). It participates in aminoacyl-tRNA biosynthesis; selenocysteinyl-tRNA(Sec) biosynthesis; L-seryl-tRNA(Sec) from L-serine and tRNA(Sec): step 1/1. Its function is as follows. Catalyzes the attachment of serine to tRNA(Ser). Is also able to aminoacylate tRNA(Sec) with serine, to form the misacylated tRNA L-seryl-tRNA(Sec), which will be further converted into selenocysteinyl-tRNA(Sec). This Acidovorax ebreus (strain TPSY) (Diaphorobacter sp. (strain TPSY)) protein is Serine--tRNA ligase.